Here is a 50-residue protein sequence, read N- to C-terminus: Large ribosomal subunit protein bL33B (50 aa).

Belongs to the bacterial ribosomal protein bL33 family.

The polypeptide is Large ribosomal subunit protein bL33B (Mycoplasmopsis agalactiae (strain NCTC 10123 / CIP 59.7 / PG2) (Mycoplasma agalactiae)).